The following is a 435-amino-acid chain: Polyadenylate-binding protein RBP47B (435 aa).

Polar residues predominate over residues 1–15 (MQTTNGSDSTLATSG). Disordered regions lie at residues 1 to 41 (MQTT…QQWM) and 85 to 104 (YGSYQQHQHQQHKAIDRGSG). A compositionally biased stretch (low complexity) spans 29 to 41 (QWQQQQQQQQQWM). RRM domains are found at residues 108-188 (KTLW…WASF), 202-281 (LSVF…IATP), and 321-393 (ATIF…WGRS). Positions 392–412 (RSPNKQWRGDSGQQWNGGYSR) are disordered.

The protein belongs to the polyadenylate-binding RBP47 family. As to quaternary structure, interacts with the poly(A) tail of mRNA in nucleus. In terms of tissue distribution, expressed at low levels in leaves, stems, flowers, and seedlings.

It localises to the nucleus. It is found in the cytoplasmic granule. Heterogeneous nuclear ribonucleoprotein (hnRNP)-protein binding the poly(A) tail of mRNA and probably involved in some steps of pre-mRNA maturation. The protein is Polyadenylate-binding protein RBP47B (RBP47B) of Arabidopsis thaliana (Mouse-ear cress).